The chain runs to 1099 residues: MAYAADQIEMITRIVEEAGELLPPQAPLGYFSHHNPLHALEELPFQRAVEHASAMLGTEALQTEEAFAAHLASGRILPRDLAAVLEHHGDRAGAVPGRHLPVGDQGPRGAGEEMLDGDAEVVPGGPTWNEFRLARLGLFIDVPRGAGALWALADGGELHRVHPLVTEARREELTRQGRRRFATTERRTRRTRRSRAARLQALRARLLAQLWEDLRRHAPPPAPRPAPLRRRDQVLEQFGVDTDEAVHPVLIRLCAAFLDQGVAAWEMPHREKGLLAAFRHLFGTLGAPREACWAGLGGQLRQQLRMNWSAERTVAWALWALQVPVHAWADTVRAALVSLRGWAGMVHQFECRPDRAPSRPAPARLMDYLAVQLTLEVVVSHNVLARLIGPDARPEDLGPLGPPGAAQGVLATGTTAQDDLTQGEQELRGGDLELAYEAFVLAQVMDVETEVLGHPRWARAWLRAVAEFDAGRRRWLLHLAYERRYRTQVLDALSAHDRRFPGTVPPPDFQAVFCMDEREESLRRHLEESHPQVRTYGASGYFGVAMAYQGLDDVRPRALCPVTMTPRSLVVERAVDDGELVAYQRARRRKAQLQHTISAARGRPARAAAYSAIAGLAELVPLAARAVAPRAAGEGVRMLGRREPARPLARLVIEAAQDHTPSTGPAGDGAQAGEAGELVPGVGAGPLRLGFTVEEMAEIVDTLLTTIGMSGPLGPVVFVIGHGSSSVNNPHAAAYDCGATGGGQSGPNARAFAAMANHPRVRAALAHRGRLIGPDTWFVGGHHDTCDSSLAYYDTDLVPAHLRPALTAATDALLTAVQLDAHERCRRFESVGPDVAAGTAHAHVRGRSEDIGQSRPEYGHSTNATCVIGRRSRTRGLYLDRRSFLVSYDPTADPDGAVLTRLLLSAAPVGAGINLEYYFSRIDPIGYGAGSKLPHNITGLVGVMDGHGSDLRTGMPWQSVEIHEPMRLLVIAEAEPERLARIVRENPPLRGLVEGGWIQLAAWDPSGPETYLYRDGAFEQHQPENLRFPVVARSEHYYAGQRDHLPPAHVLAAFGESPDAVIDRPGTVAAAGAGAAQPTRDAIELPEQASGPLPARDGQ.

The tract at residues 175 to 194 (RQGRRRFATTERRTRRTRRS) is disordered. Basic residues predominate over residues 176–194 (QGRRRFATTERRTRRTRRS). Zn(2+)-binding residues include Cys514, Asp516, His722, and Cys737. Positions 1071 to 1099 (AGAGAAQPTRDAIELPEQASGPLPARDGQ) are disordered.

Belongs to the inorganic carbon transporter (TC 9.A.2) DabA family. In terms of assembly, forms a complex with DabB. Zn(2+) serves as cofactor.

Its subcellular location is the cell membrane. Functionally, part of an energy-coupled inorganic carbon pump. This is Probable inorganic carbon transporter subunit DabA from Parafrankia sp. (strain EAN1pec).